Here is a 215-residue protein sequence, read N- to C-terminus: Adenylate kinase (215 aa).

10–15 is an ATP binding site; sequence GAGKGT. The tract at residues 30-59 is NMP; the sequence is STGDILRENVKNETELGKKAKEYMDKGLLV. Residues threonine 31, arginine 36, 57–59, 85–88, and glutamine 92 contribute to the AMP site; these read LLV and GFPR. The segment at 126–163 is LID; sequence GRRICKNCGASFHVIYRPPQKEGVCDVCGGELYQREDD. ATP is bound at residue arginine 127. 2 residues coordinate Zn(2+): cysteine 130 and cysteine 133. 136–137 provides a ligand contact to ATP; it reads SF. Residues cysteine 150 and cysteine 153 each coordinate Zn(2+). Positions 160 and 171 each coordinate AMP. Position 198 (glutamine 198) interacts with ATP.

Belongs to the adenylate kinase family. As to quaternary structure, monomer.

It is found in the cytoplasm. It catalyses the reaction AMP + ATP = 2 ADP. The protein operates within purine metabolism; AMP biosynthesis via salvage pathway; AMP from ADP: step 1/1. In terms of biological role, catalyzes the reversible transfer of the terminal phosphate group between ATP and AMP. Plays an important role in cellular energy homeostasis and in adenine nucleotide metabolism. This Caldicellulosiruptor bescii (strain ATCC BAA-1888 / DSM 6725 / KCTC 15123 / Z-1320) (Anaerocellum thermophilum) protein is Adenylate kinase.